A 438-amino-acid chain; its full sequence is POU domain, class 3, transcription factor 3-A (438 aa).

3 disordered regions span residues Val-22 to Gly-43, Ser-102 to Gln-172, and Gly-186 to Asp-248. Polar residues-rich tracts occupy residues Pro-103–Ser-123 and Gln-146–His-159. The segment covering Ile-160–Gln-172 has biased composition (low complexity). The span at His-210–His-230 shows a compositional bias: basic residues. The 75-residue stretch at Glu-242–Asp-316 folds into the POU-specific domain. A DNA-binding region (homeobox) is located at residues Lys-334 to Thr-393.

The protein belongs to the POU transcription factor family. Class-3 subfamily. Predominantly expressed in the embryonic and adult central nervous system. In adults, isoform 2 is expressed in the brain, ovary, basal cells of the skin and muscle satellite cells.

It is found in the nucleus. Transcription factor that may play important roles in patterning the embryonic brain. The sequence is that of POU domain, class 3, transcription factor 3-A (pou3f3a) from Danio rerio (Zebrafish).